Reading from the N-terminus, the 3305-residue chain is Apolipophorins (3305 aa).

Positions Met1–Gly23 are cleaved as a signal peptide. Residues Phe39–Val640 enclose the Vitellogenin domain. N-linked (GlcNAc...) asparagine glycosylation is found at Asn643 and Asn2769. One can recognise a VWFD domain in the interval Leu2733–Pro2899. Cys2757 and Cys2898 are disulfide-bonded.

In terms of processing, cleaved into 2 chains by furin protease. However, prevention of cleavage does not impair its function. Post-translationally, N-glycosylated.

The protein localises to the secreted. In terms of biological role, constitutes the major component of lipophorin, which mediates transport for various types of lipids in hemolymph. Acts by forming lipoprotein particles that bind lipoproteins and lipids. May be required for morphogens wingless (wg) and hedgehog (hh) function, possibly by acting as vehicles for the movement of wg and hh. The polypeptide is Apolipophorins (Manduca sexta (Tobacco hawkmoth)).